A 497-amino-acid chain; its full sequence is Angiopoietin-1 (497 aa).

Positions 1–15 are cleaved as a signal peptide; the sequence is MTVFLSFAFLAAILT. Residues Asn92, Asn122, Asn154, Asn243, and Asn294 are each glycosylated (N-linked (GlcNAc...) asparagine). The stretch at 153–261 forms a coiled coil; that stretch reads LNQTSRLEIQ…LELMDTVHNL (109 aa). In terms of domain architecture, Fibrinogen C-terminal spans 276-496; sequence KEEEKPFRDC…STTMMIRPLD (221 aa). Intrachain disulfides connect Cys285/Cys314 and Cys438/Cys451.

In terms of assembly, homooligomer. Interacts with TEK/TIE2. Interacts with SVEP1/polydom. Interacts with THBD; this interaction significantly inhibits the generation of activated PC and TAFIa/CPB2 by the thrombin/thrombomodulin complex.

Its subcellular location is the secreted. Functionally, binds and activates TIE2 receptor by inducing its tyrosine phosphorylation. Implicated in endothelial developmental processes later and distinct from that of VEGF. Appears to play a crucial role in mediating reciprocal interactions between the endothelium and surrounding matrix and mesenchyme. Mediates blood vessel maturation/stability. It may play an important role in the heart early development. The chain is Angiopoietin-1 (ANGPT1) from Bos taurus (Bovine).